A 1367-amino-acid polypeptide reads, in one-letter code: Mediator of RNA polymerase II transcription subunit 23 (1367 aa).

The disordered stretch occupies residues 1343 to 1367; that stretch reads PPQALNSGSPAPQSNQVPASLPVTQ. Residues 1346-1367 show a composition bias toward polar residues; sequence ALNSGSPAPQSNQVPASLPVTQ.

Belongs to the Mediator complex subunit 23 family. In terms of assembly, component of the Mediator complex, which is composed of MED1, MED4, MED6, MED7, MED8, MED9, MED10, MED11, MED12, MED13, MED13L, MED14, MED15, MED16, MED17, MED18, MED19, MED20, MED21, MED22, MED23, MED24, MED25, MED26, MED27, MED29, MED30, MED31, CCNC, CDK8 and CDC2L6/CDK11. The MED12, MED13, CCNC and CDK8 subunits form a distinct module termed the CDK8 module. Mediator containing the CDK8 module is less active than Mediator lacking this module in supporting transcriptional activation. Individual preparations of the Mediator complex lacking one or more distinct subunits have been variously termed ARC, CRSP, DRIP, PC2, SMCC and TRAP. Interacts with CEBPB (when not methylated), CTNNB1, and GLI3. Interacts with CDK8 and ELK1.

The protein resides in the nucleus. Functionally, component of the Mediator complex, a coactivator involved in the regulated transcription of nearly all RNA polymerase II-dependent genes. Mediator functions as a bridge to convey information from gene-specific regulatory proteins to the basal RNA polymerase II transcription machinery. Mediator is recruited to promoters by direct interactions with regulatory proteins and serves as a scaffold for the assembly of a functional pre-initiation complex with RNA polymerase II and the general transcription factors. Also required for transcriptional activation subsequent to the assembly of the pre-initiation complex. Required for transcriptional activation by adenovirus E1A protein. Required for ELK1-dependent transcriptional activation in response to activated Ras signaling. This chain is Mediator of RNA polymerase II transcription subunit 23 (Med23), found in Mus musculus (Mouse).